A 91-amino-acid chain; its full sequence is Small ribosomal subunit protein bS16 (91 aa).

This sequence belongs to the bacterial ribosomal protein bS16 family. Part of the 30S ribosomal subunit.

Its function is as follows. Binds to the lower part of the body of the 30S subunit, where it stabilizes two of its domains. The chain is Small ribosomal subunit protein bS16 from Thermus thermophilus.